Consider the following 277-residue polypeptide: Carbonyl reductase [NADPH] 1 (277 aa).

At Ser-2 the chain carries N-acetylserine. Residues Ser-2 and Ser-30 each carry the phosphoserine modification. Residues Val-10 to Val-34, Asp-63 to Ile-64, and Asn-90 each bind NADP(+). Glutathione contacts are provided by residues Phe-95 to Val-97 and Gln-106. Position 140 (Ser-140) interacts with substrate. Ala-193–Tyr-194 lines the glutathione pocket. Tyr-194 serves as the catalytic Proton acceptor. Residues Tyr-194 to Lys-198 and Val-231 to Thr-233 contribute to the NADP(+) site. At Lys-239 the chain carries N6-1-carboxyethyl lysine.

It belongs to the short-chain dehydrogenases/reductases (SDR) family. Monomer. As to expression, expressed in kidney (at protein level).

It localises to the cytoplasm. The catalysed reaction is a secondary alcohol + NADP(+) = a ketone + NADPH + H(+). It carries out the reaction a primary alcohol + NADP(+) = an aldehyde + NADPH + H(+). The enzyme catalyses prostaglandin F2alpha + NADP(+) = prostaglandin E2 + NADPH + H(+). It catalyses the reaction prostaglandin E1 + NADP(+) = 15-oxoprostaglandin E1 + NADPH + H(+). The catalysed reaction is menadione + NADPH + H(+) = menadiol + NADP(+). It carries out the reaction prostaglandin D2 + NADP(+) = 15-oxoprostaglandin D2 + NADPH + H(+). The enzyme catalyses prostaglandin E2 + NADP(+) = 15-oxoprostaglandin E2 + NADPH + H(+). It catalyses the reaction prostaglandin F2alpha + NADP(+) = 15-oxoprostaglandin F2alpha + NADPH + H(+). The catalysed reaction is daunorubicin + NADPH + H(+) = 13-dihydrodaunorubicin + NADP(+). It carries out the reaction S-nitrosoglutathione + NADPH + H(+) = S-(hydroxysulfenamide)glutathione + NADP(+). The enzyme catalyses cortisol + NADPH + H(+) = 20beta-dihydrocortisol + NADP(+). It catalyses the reaction corticosterone + NADPH + H(+) = 20beta-dihydrocorticosterone + NADP(+). Inhibited by quercetin, rutenin and its derivatives. NADPH-dependent reductase with broad substrate specificity. Catalyzes the reduction of a wide variety of carbonyl compounds including quinones, prostaglandins, menadione, plus various xenobiotics. Catalyzes the reduction of the antitumor anthracyclines doxorubicin and daunorubicin to the cardiotoxic compounds doxorubicinol and daunorubicinol. Can convert prostaglandin E to prostaglandin F2-alpha. Can bind glutathione, which explains its higher affinity for glutathione-conjugated substrates. Catalyzes the reduction of S-nitrosoglutathione. In addition, participates in the glucocorticoid metabolism by catalyzing the NADPH-dependent cortisol/corticosterone into 20beta-dihydrocortisol (20b-DHF) or 20beta-corticosterone (20b-DHB), which are weak agonists of NR3C1 and NR3C2 in adipose tissue. The sequence is that of Carbonyl reductase [NADPH] 1 from Homo sapiens (Human).